The following is a 79-amino-acid chain: Short neurotoxin 1/5 (79 aa).

An N-terminal signal peptide occupies residues 1–21 (MKTLLLTLVMVTIMCLDLGYT). Disulfide bonds link cysteine 24/cysteine 41, cysteine 34/cysteine 59, cysteine 63/cysteine 71, and cysteine 72/cysteine 77.

The protein belongs to the three-finger toxin family. Short-chain subfamily. Type III alpha-neurotoxin sub-subfamily. As to expression, expressed by the venom gland.

The protein resides in the secreted. Its function is as follows. Binds with high affinity to muscle nicotinic acetylcholine receptor (nAChR) and inhibit acetylcholine from binding to the receptor, thereby impairing neuromuscular transmission. Compete with the binding of alpha-bungarotoxin on muscle AChR (from Torpedo) with an IC(50) of 0.31 uM (SNTX1) and 3.1 uM (SNTX5). Is able of exerting muscle paralysis, spasms and increased respiration. In Pseudonaja textilis (Eastern brown snake), this protein is Short neurotoxin 1/5.